The sequence spans 161 residues: Allophycocyanin alpha chain (161 aa).

Asn-71 carries the N4-methylasparagine modification. Cys-81 contacts (2R,3E)-phycocyanobilin.

This sequence belongs to the phycobiliprotein family. As to quaternary structure, heterodimer of an alpha and a beta chain. In terms of processing, contains one covalently linked phycocyanobilin chromophore.

Its subcellular location is the cellular thylakoid membrane. Light-harvesting photosynthetic bile pigment-protein from the phycobiliprotein complex. Allophycocyanin has a maximum absorption at approximately 650 nanometers. This chain is Allophycocyanin alpha chain (apcA), found in Synechocystis sp. (strain PCC 6714) (Aphanocapsa sp. (strain PCC 6714)).